Here is a 293-residue protein sequence, read N- to C-terminus: MPWIQLKLNTTGANAEDLSDALMEAGSVSITFQDTHDTPVFEPLPGETRLWGDTDVIGLFDAETDMKAVVAQLEQHPLLGAGFAHKIEQLEDKDWEREWMDNFHPMRFGERLWICPSWRDVPDENAVNVMLDPGLAFGTGTHPTTSLCLQWLDGLDLNGKTVIDFGCGSGILAIAALKLGAAKAIGIDIDPQAIQASRDNAQRNGVSERLELYLPQDQPESMKADVVVANILAGPLRELAPLISVLPVSGGLLGLSGILASQAESVCEAYADLFALDPVVEKEEWCRITGRKN.

S-adenosyl-L-methionine is bound by residues threonine 145, glycine 166, aspartate 188, and asparagine 230.

Belongs to the methyltransferase superfamily. PrmA family.

It is found in the cytoplasm. The catalysed reaction is L-lysyl-[protein] + 3 S-adenosyl-L-methionine = N(6),N(6),N(6)-trimethyl-L-lysyl-[protein] + 3 S-adenosyl-L-homocysteine + 3 H(+). Methylates ribosomal protein L11. The sequence is that of Ribosomal protein L11 methyltransferase from Klebsiella pneumoniae subsp. pneumoniae (strain ATCC 700721 / MGH 78578).